The chain runs to 441 residues: Mitochondrial inner membrane protein OXA1L (441 aa).

Over 1-113 the chain is Mitochondrial intermembrane; sequence MALALMCGRR…QAAAEQSFAE (113 aa). A helical membrane pass occupies residues 114–134; sequence LGLGSYTPVGLIQNLLEFMHV. Residues 135–139 are Mitochondrial matrix-facing; sequence NLGLP. A helical transmembrane segment spans residues 140–160; the sequence is WWGAIAACTVLARCLVFPLIV. Topologically, residues 161–212 are mitochondrial intermembrane; the sequence is KGQREAAKIHNHLPEIQKFSARIREAKLTGNHTEFYRASSEMTFYQKKHDIK. Residues 213-233 traverse the membrane as a helical segment; sequence LFRPLILPLTQAPIFISFFIA. Residues 234 to 260 lie on the Mitochondrial matrix side of the membrane; it reads LREMANLPVPSLQTGGLWWFQDLTLSD. Residues 261–281 form a helical membrane-spanning segment; that stretch reads PIYVLPLVVTATMWGVLELGA. Residues 282-298 lie on the Mitochondrial intermembrane side of the membrane; sequence ETGMQSSDLQWMRNFIR. A helical membrane pass occupies residues 299 to 319; sequence LMPLAVLPITIHFPTAVFMYW. Residues 320-441 lie on the Mitochondrial matrix side of the membrane; the sequence is LSSNMFSLGQ…SKQPWRDTLG (122 aa). Position 364 is a phosphoserine (serine 364). Position 400 is a phosphothreonine (threonine 400). Residues 405-441 form a disordered region; the sequence is PLLQHGKNDPPNTPNSSSSSSSSNKAKSKQPWRDTLG. Residues 418 to 429 show a composition bias toward low complexity; that stretch reads PNSSSSSSSSNK.

This sequence belongs to the OXA1/ALB3/YidC family. As to quaternary structure, monomer; predominantly monomeric at low salt concentrations. Homooligomer; predominantly homooligomeric at high salt concentrations. Associates with the mitochondrial ribosome. Associates preferentially as a dimer with the large ribosomal subunit 39S of the mitochondrial ribosome. Interacts with OXA1L; promoting cotranslational quality control in mitochondria.

Its subcellular location is the mitochondrion inner membrane. In terms of biological role, mitochondrial membrane insertase that mediates the cotranslational insertion of integral membrane proteins into the mitochondrial inner membrane. Essential for the activity and assembly of cytochrome oxidase. Required for the correct biogenesis of ATP synthase and complex I in mitochondria. In Bos taurus (Bovine), this protein is Mitochondrial inner membrane protein OXA1L (OXA1L).